A 403-amino-acid chain; its full sequence is Protein WVD2-like 6 (403 aa).

Disordered regions lie at residues 1-179 and 254-403; these read MDSE…ALPN and LKKI…AVEP. Polar residues predominate over residues 25–56; that stretch reads GDSSNGNGGTSENLECCSTQHPMEASEGTQNE. Over residues 103-118 the composition is skewed to low complexity; that stretch reads SVAPNVKPVKSPKSKS. Residue S113 is modified to Phosphoserine. 3 stretches are compositionally biased toward basic and acidic residues: residues 120–132, 139–153, and 162–171; these read NGRE…HGNH, GTRD…RKQV, and QYPKEDDGKP. Residues 263 to 273 are compositionally biased toward basic residues; sequence KSPKLGRKKTN. Low complexity predominate over residues 336–348; that stretch reads KVAPAKAVTASTK. The segment covering 385 to 394 has biased composition (basic and acidic residues); that stretch reads VNEDRNESHM.

Belongs to the TPX2 family. As to expression, expressed in seedlings.

The protein resides in the cytoplasm. Its subcellular location is the cytoskeleton. Functionally, microtubule-associated protein (MAP) that regulates the orientation of interphase cortical microtubules. The sequence is that of Protein WVD2-like 6 from Arabidopsis thaliana (Mouse-ear cress).